The following is a 98-amino-acid chain: C-X-C motif chemokine 10 (98 aa).

Residues 1 to 21 (MNPSAAVVLCLVLLSLSGTQG) form the signal peptide. Arg26 is subject to Citrulline. Disulfide bonds link Cys30–Cys57 and Cys32–Cys74.

It belongs to the intercrine alpha (chemokine CxC) family. Monomer, dimer, and tetramer. Interacts with CXCR3 (via N-terminus). In the central nervous system, CXCL10 is predominantly localized to activated neurons. Expressed in both microglia and astrocytes.

The protein localises to the secreted. Its function is as follows. Pro-inflammatory cytokine that is involved in a wide variety of processes such as chemotaxis, differentiation, and activation of peripheral immune cells, regulation of cell growth, apoptosis and modulation of angiostatic effects. Plays thereby an important role during viral infections by stimulating the activation and migration of immune cells to the infected sites. Mechanistically, binding of CXCL10 to the CXCR3 receptor activates G protein-mediated signaling and results in downstream activation of phospholipase C-dependent pathway, an increase in intracellular calcium production and actin reorganization. In turn, recruitment of activated Th1 lymphocytes occurs at sites of inflammation. Activation of the CXCL10/CXCR3 axis also plays an important role in neurons in response to brain injury for activating microglia, the resident macrophage population of the central nervous system, and directing them to the lesion site. This recruitment is an essential element for neuronal reorganization. The chain is C-X-C motif chemokine 10 (Cxcl10) from Rattus norvegicus (Rat).